A 206-amino-acid polypeptide reads, in one-letter code: Large ribosomal subunit protein uL4 (206 aa).

The segment at 63–93 (MYKQKGTGRARHHSARAPQFRGGGKAHGPVV) is disordered. Positions 64-77 (YKQKGTGRARHHSA) are enriched in basic residues.

Belongs to the universal ribosomal protein uL4 family. As to quaternary structure, part of the 50S ribosomal subunit.

In terms of biological role, one of the primary rRNA binding proteins, this protein initially binds near the 5'-end of the 23S rRNA. It is important during the early stages of 50S assembly. It makes multiple contacts with different domains of the 23S rRNA in the assembled 50S subunit and ribosome. Functionally, forms part of the polypeptide exit tunnel. In Rhizobium meliloti (strain 1021) (Ensifer meliloti), this protein is Large ribosomal subunit protein uL4.